The chain runs to 178 residues: Peptidyl-prolyl cis-trans isomerase (178 aa).

The first 17 residues, 1-17 (MKLLFFFLVLAVSAAVA), serve as a signal peptide directing secretion. The region spanning 26 to 177 (FMDIEIDGES…KIAKITDIGL (152 aa)) is the PPIase cyclophilin-type domain.

Belongs to the cyclophilin-type PPIase family. PPIase A subfamily.

The catalysed reaction is [protein]-peptidylproline (omega=180) = [protein]-peptidylproline (omega=0). Its function is as follows. PPIases accelerate the folding of proteins. It catalyzes the cis-trans isomerization of proline imidic peptide bonds in oligopeptides. Up-regulates interferon gamma production by bovine T-cells. Stimulates high levels of IFN-gamma production by peripheral blood mononuclear cells and T-cells. The IFN-gamma-inducing effect is blocked by cyclosporin A (CsA). The polypeptide is Peptidyl-prolyl cis-trans isomerase (Neospora caninum (Coccidian parasite)).